The following is a 246-amino-acid chain: Small ribosomal subunit protein uS2 (246 aa).

This sequence belongs to the universal ribosomal protein uS2 family.

In Burkholderia vietnamiensis (strain G4 / LMG 22486) (Burkholderia cepacia (strain R1808)), this protein is Small ribosomal subunit protein uS2.